Here is a 71-residue protein sequence, read N- to C-terminus: Small ribosomal subunit protein bS21 (71 aa).

The span at 48–59 shows a compositional bias: basic residues; sequence KAAAAVKRHAKK. The interval 48 to 71 is disordered; sequence KAAAAVKRHAKKVQRENRKFQRLY. Residues 60–71 are compositionally biased toward basic and acidic residues; it reads VQRENRKFQRLY.

The protein belongs to the bacterial ribosomal protein bS21 family.

The sequence is that of Small ribosomal subunit protein bS21 from Saccharophagus degradans (strain 2-40 / ATCC 43961 / DSM 17024).